The chain runs to 177 residues: Thioredoxin M-type, chloroplastic (177 aa).

Residues 1–64 (MAAFTCTSSP…SRLRRGGIIC (64 aa)) constitute a chloroplast transit peptide. Residues 65 to 177 (EAQDTATGIP…LATSIDKFLQ (113 aa)) form the Thioredoxin domain. Active-site nucleophile residues include cysteine 101 and cysteine 104. Cysteines 101 and 104 form a disulfide.

Belongs to the thioredoxin family. Plant M-type subfamily. In terms of assembly, forms a complex with heterodimeric ferredoxin-thioredoxin reductase (FTR) and ferredoxin.

Its subcellular location is the plastid. The protein resides in the chloroplast. Functionally, participates in various redox reactions through the reversible oxidation of the active center dithiol to a disulfide. The M form is known to activate NADP-malate dehydrogenase. This Brassica napus (Rape) protein is Thioredoxin M-type, chloroplastic.